Here is a 160-residue protein sequence, read N- to C-terminus: Large ribosomal subunit protein uL22c (160 aa).

Belongs to the universal ribosomal protein uL22 family. Part of the 50S ribosomal subunit.

The protein localises to the plastid. The protein resides in the chloroplast. Its function is as follows. This protein binds specifically to 23S rRNA. The globular domain of the protein is located near the polypeptide exit tunnel on the outside of the subunit, while an extended beta-hairpin is found that lines the wall of the exit tunnel in the center of the 70S ribosome. The protein is Large ribosomal subunit protein uL22c (rpl22) of Aethionema cordifolium (Lebanon stonecress).